The following is a 390-amino-acid chain: MAFDLAARLAERRAADLYRQRPLLQSPQGPNVVVDGQPLLAFCSNDYLGLANHPEVIAAWQAGAERWGVGGGASHLVVGHSTPHHQVEEALAELTGRPRALLFSTGYMANLGAITALVGQGDTVLQDRLNHASLLDGGLLSGARFNRYLHNDAVSLANRLGKACGNTLVVTDGVFSMDGDLADLPALAEVARARGAWLMVDDAHGLGTLGAHGGGIVEHFGLGIDDVPVLIGTLGKACGTAGAFVAGSDDLIEALVQFARPYIYTTSQPPALACATLKSLELLRRETWRREHLAGLIRQFREGAVQIGLQLMDSPTPIQPILIGDSAQALRLSQMLRERGLLVTAIRPPTVPAGSARLRVTLSAAHSEAQVQLLLNALADCYPQLEAADA.

Residue Arg19 participates in substrate binding. 106–107 (GY) is a pyridoxal 5'-phosphate binding site. His131 is a substrate binding site. The pyridoxal 5'-phosphate site is built by Ser176, His204, and Thr233. The residue at position 236 (Lys236) is an N6-(pyridoxal phosphate)lysine. Residue Thr350 coordinates substrate.

Belongs to the class-II pyridoxal-phosphate-dependent aminotransferase family. BioF subfamily. In terms of assembly, homodimer. It depends on pyridoxal 5'-phosphate as a cofactor.

The enzyme catalyses 6-carboxyhexanoyl-[ACP] + L-alanine + H(+) = (8S)-8-amino-7-oxononanoate + holo-[ACP] + CO2. The protein operates within cofactor biosynthesis; biotin biosynthesis. Catalyzes the decarboxylative condensation of pimeloyl-[acyl-carrier protein] and L-alanine to produce 8-amino-7-oxononanoate (AON), [acyl-carrier protein], and carbon dioxide. The chain is 8-amino-7-oxononanoate synthase from Pseudomonas putida (strain W619).